Consider the following 868-residue polypeptide: Rifampicin phosphotransferase (868 aa).

Residues 5 to 317 form an ATP-binding region; sequence TERYVLDLQE…FHIVQSRPIT (313 aa). ATP is bound by residues Lys26, Arg120, Gly135, Thr139, Gln186, Glu300, Gln312, and Arg314. Residues 330-755 are rifampicin-binding; sequence NHVYVSVGHQ…TSDGEALTGA (426 aa). Residues 410–430 are disordered; that stretch reads FVPSLPDAPPAGPRAGAAPEP. Residues 768–866 are swivel phosphohistidine; the sequence is GLPVSTGTVE…VHGTDGYIEI (99 aa). His826 (tele-phosphohistidine intermediate) is an active-site residue.

It belongs to the rifampicin phosphotransferase family.

The catalysed reaction is rifampicin + ATP + H2O = 21-phosphorifampicin + AMP + phosphate + 2 H(+). Functionally, catalyzes the phosphorylation of rifampicin, also known as rifampin (RIF), leading to its inactivation. Confers high level resistance to a variety of clinically used rifamycin antibiotics. Does not show phosphoenolpyruvate (PEP) synthase activity. The sequence is that of Rifampicin phosphotransferase from Streptomyces sviceus (strain ATCC 29083 / DSM 924 / JCM 4929 / NBRC 13980 / NCIMB 11184 / NRRL 5439 / UC 5370).